The sequence spans 183 residues: CASP-like protein UU1 (183 aa).

At 1–33 the chain is on the cytoplasmic side; the sequence is MEESQQQSTKFDAPPSPYVPSRVYLAQIYWKKP. The chain crosses the membrane as a helical span at residues 34 to 54; that stretch reads AIVVLRVLQFVFSLIAFSVMA. Topologically, residues 55-72 are extracellular; sequence DLLHDVQGSIKSLSYTVA. Residues 73–93 traverse the membrane as a helical segment; it reads IGVLACAYALAQLSFSLWCVI. The Cytoplasmic portion of the chain corresponds to 94-118; that stretch reads RGATSSSGVTPLYQYATFICDQMST. The helical transmembrane segment at 119 to 139 threads the bilayer; that stretch reads YFLISAASATATLIDVSGVCG. The Extracellular portion of the chain corresponds to 140–156; it reads SNGSGTNLCSRSTASVT. N-linked (GlcNAc...) asparagine glycosylation occurs at Asn141. The chain crosses the membrane as a helical span at residues 157-177; sequence FAFLAFLAFSASSVLTGYYLV. The Cytoplasmic segment spans residues 178 to 183; sequence KCILKA.

It belongs to the Casparian strip membrane proteins (CASP) family. As to quaternary structure, homodimer and heterodimers.

The protein localises to the cell membrane. The polypeptide is CASP-like protein UU1 (Selaginella moellendorffii (Spikemoss)).